Reading from the N-terminus, the 372-residue chain is Glutamate 5-kinase (372 aa).

Lys14 serves as a coordination point for ATP. Substrate is bound by residues Ser55, Asp142, and Asn154. ATP is bound by residues 174-175 and 216-222; these read SD and TGGMETK. The 79-residue stretch at 279-357 folds into the PUA domain; sequence QGSIIVDLGA…WEIADVLGHK (79 aa).

This sequence belongs to the glutamate 5-kinase family.

The protein resides in the cytoplasm. It catalyses the reaction L-glutamate + ATP = L-glutamyl 5-phosphate + ADP. The protein operates within amino-acid biosynthesis; L-proline biosynthesis; L-glutamate 5-semialdehyde from L-glutamate: step 1/2. Its function is as follows. Catalyzes the transfer of a phosphate group to glutamate to form L-glutamate 5-phosphate. The polypeptide is Glutamate 5-kinase (Carboxydothermus hydrogenoformans (strain ATCC BAA-161 / DSM 6008 / Z-2901)).